Reading from the N-terminus, the 464-residue chain is Protein FAM90A26 (464 aa).

Disordered regions lie at residues 1 to 42, 70 to 293, 312 to 390, and 410 to 442; these read MMAC…DPRL, PPTL…AKRP, PFQI…DGAQ, and AAPS…VRVP. 2 stretches are compositionally biased toward basic and acidic residues: residues 74–83 and 97–114; these read GKKEGKENLK and NKDK…DPQR. Positions 178–197 are enriched in low complexity; the sequence is SALASLSPLRKASLSSSSSL.

The protein belongs to the FAM90 family.

The sequence is that of Protein FAM90A26 from Homo sapiens (Human).